A 174-amino-acid polypeptide reads, in one-letter code: RNA pyrophosphohydrolase (174 aa).

The Nudix hydrolase domain occupies 6–149; the sequence is GFRANVGIII…KRDVYRKVMK (144 aa). Residues 38–59 carry the Nudix box motif; sequence GGVDDGESAEEAMYRELYEEVG.

Belongs to the Nudix hydrolase family. RppH subfamily. Requires a divalent metal cation as cofactor.

Accelerates the degradation of transcripts by removing pyrophosphate from the 5'-end of triphosphorylated RNA, leading to a more labile monophosphorylated state that can stimulate subsequent ribonuclease cleavage. This chain is RNA pyrophosphohydrolase, found in Shewanella sp. (strain ANA-3).